A 98-amino-acid chain; its full sequence is Ubiquitin-related modifier 1 (98 aa).

At Gly98 the chain carries 1-thioglycine. Residue Gly98 forms a Glycyl lysine isopeptide (Gly-Lys) (interchain with K-? in acceptor proteins) linkage.

It belongs to the URM1 family. Post-translationally, C-terminal thiocarboxylation occurs in 2 steps, it is first acyl-adenylated (-COAMP) via the hesA/moeB/thiF part of UBA4, then thiocarboxylated (-COSH) via the rhodanese domain of UBA4.

The protein localises to the cytoplasm. It functions in the pathway tRNA modification; 5-methoxycarbonylmethyl-2-thiouridine-tRNA biosynthesis. Acts as a sulfur carrier required for 2-thiolation of mcm(5)S(2)U at tRNA wobble positions of cytosolic tRNA(Lys), tRNA(Glu) and tRNA(Gln). Serves as sulfur donor in tRNA 2-thiolation reaction by being thiocarboxylated (-COSH) at its C-terminus by the MOCS3 homolog UBA4. The sulfur is then transferred to tRNA to form 2-thiolation of mcm(5)S(2)U. Prior mcm(5) tRNA modification by the elongator complex is required for 2-thiolation. Also acts as a ubiquitin-like protein (UBL) that is covalently conjugated via an isopeptide bond to lysine residues of target proteins such as AHP1. The thiocarboxylated form serves as substrate for conjugation and oxidative stress specifically induces the formation of UBL-protein conjugates. The protein is Ubiquitin-related modifier 1 of Candida glabrata (strain ATCC 2001 / BCRC 20586 / JCM 3761 / NBRC 0622 / NRRL Y-65 / CBS 138) (Yeast).